Consider the following 847-residue polypeptide: Aryl hydrocarbon receptor (847 aa).

A disordered region spans residues 1–39; sequence MNGGGANITYASRKRRKPVQKTVKPIPAEGIKSNPSKRH. 2 consecutive short sequence motifs (nuclear localization signal) follow at residues 13-16 and 37-42; these read RKRR and KRHRDR. Positions 27 to 80 constitute a bHLH domain; it reads PAEGIKSNPSKRHRDRLNTELDRLASLLPFPQDVINKLDKLSVLRLSVSYLRAK. The DNA-binding stretch occupies residues 38–66; the sequence is RHRDRLNTELDRLASLLPFPQDVINKLDK. 3 required for maintaining the overall integrity of the AHR:ARNT heterodimer and its transcriptional activity regions span residues 50–82, 117–125, and 264–266; these read LASL…AKSF, LLQALNGFV, and FAI. The Nuclear export signal signature appears at 64 to 72; the sequence is LDKLSVLRL. The PAS 1 domain maps to 120–173; that stretch reads ALNGFVLVVTVDALVFYASSTIQDYLGFQQSDVIHQSVYELIHTEDRAEFQRQL. Residues 281 to 336 enclose the PAS 2 domain; sequence KNFIFRTKHKLDFTPTGCDAKGQIVLGYTEAELCMRGSGYQFIHAADMLYCAESHI. The PAC domain occupies 346–384; the sequence is LAVFRLLTKDNRWAWVQSNARFIYKNGRPDFIIATQRPL. Disordered stretches follow at residues 430–452 and 825–847; these read KSGT…VHPS and HLPP…GRLL. Residues 440-452 are compositionally biased toward polar residues; it reads TKPTPSKDSVHPS.

As to quaternary structure, homodimer. Heterodimer; efficient DNA binding requires dimerization with another bHLH protein. Binds MYBBP1A. Interacts with coactivators including SRC-1, RIP140 and NOCA7, and with the corepressor SMRT. Interacts with NEDD8 and IVNS1ABP. Interacts with BMAL1. Interacts with HSP90AB1. Interacts with ARNT; the heterodimer ARNT:AHR binds to core DNA sequence 5'-TGCGTG-3' within the dioxin response element (DRE) of target gene promoters and activates their transcription. Interacts with TIPARP; leading to mono-ADP-ribosylation of AHR and subsequent inhibition of AHR. Mono-ADP-ribosylated, leading to inhibit transcription activator activity of AHR.

It is found in the cytoplasm. The protein localises to the nucleus. Ligand-activated transcription factor that enables cells to adapt to changing conditions by sensing compounds from the environment, diet, microbiome and cellular metabolism, and which plays important roles in development, immunity and cancer. Upon ligand binding, translocates into the nucleus, where it heterodimerizes with ARNT and induces transcription by binding to xenobiotic response elements (XRE). Regulates a variety of biological processes, including angiogenesis, hematopoiesis, drug and lipid metabolism, cell motility and immune modulation. Xenobiotics can act as ligands: upon xenobiotic-binding, activates the expression of multiple phase I and II xenobiotic chemical metabolizing enzyme genes (such as the CYP1A1 gene). Mediates biochemical and toxic effects of halogenated aromatic hydrocarbons. Next to xenobiotics, natural ligands derived from plants, microbiota, and endogenous metabolism are potent AHR agonists. Tryptophan (Trp) derivatives constitute an important class of endogenous AHR ligands. Acts as a negative regulator of anti-tumor immunity: indoles and kynurenic acid generated by Trp catabolism act as ligand and activate AHR, thereby promoting AHR-driven cancer cell motility and suppressing adaptive immunity. Regulates the circadian clock by inhibiting the basal and circadian expression of the core circadian component PER1. Inhibits PER1 by repressing the CLOCK-BMAL1 heterodimer mediated transcriptional activation of PER1. The heterodimer ARNT:AHR binds to core DNA sequence 5'-TGCGTG-3' within the dioxin response element (DRE) of target gene promoters and activates their transcription. In Oryctolagus cuniculus (Rabbit), this protein is Aryl hydrocarbon receptor (AHR).